The chain runs to 389 residues: Pregnancy-associated glycoprotein 1 (389 aa).

Positions 1-15 (MKWLVILGLVALSEC) are cleaved as a signal peptide. One can recognise a Peptidase A1 domain in the interval 76–386 (YVGNITIGTP…DRGQNRIGLR (311 aa)). A glycan (N-linked (GlcNAc...) asparagine) is linked at N79. D94 is an active-site residue. C107 and C112 are disulfide-bonded. N130 is a glycosylation site (N-linked (GlcNAc...) asparagine). The cysteines at positions 268 and 272 are disulfide-linked. Residue D277 is part of the active site. C311 and C345 are disulfide-bonded. N348 is a glycosylation site (N-linked (GlcNAc...) asparagine).

Belongs to the peptidase A1 family. In terms of tissue distribution, expressed throughout the chorion, with the signal localized exclusively over the trophectoderm.

It localises to the secreted. The protein localises to the extracellular space. Functionally, appears to be proteolytically inactive. The sequence is that of Pregnancy-associated glycoprotein 1 from Sus scrofa (Pig).